The chain runs to 236 residues: Purine nucleoside phosphorylase DeoD-type (236 aa).

Histidine 5 is an a purine D-ribonucleoside binding site. Residues glycine 21, arginine 25, arginine 44, and 88 to 91 (RVGS) contribute to the phosphate site. A purine D-ribonucleoside-binding positions include 180–182 (DME) and 204–205 (SD). Aspartate 205 serves as the catalytic Proton donor.

Belongs to the PNP/UDP phosphorylase family. Homohexamer; trimer of homodimers.

It catalyses the reaction a purine D-ribonucleoside + phosphate = a purine nucleobase + alpha-D-ribose 1-phosphate. The catalysed reaction is a purine 2'-deoxy-D-ribonucleoside + phosphate = a purine nucleobase + 2-deoxy-alpha-D-ribose 1-phosphate. In terms of biological role, catalyzes the reversible phosphorolytic breakdown of the N-glycosidic bond in the beta-(deoxy)ribonucleoside molecules, with the formation of the corresponding free purine bases and pentose-1-phosphate. The chain is Purine nucleoside phosphorylase DeoD-type from Aliivibrio salmonicida (strain LFI1238) (Vibrio salmonicida (strain LFI1238)).